Reading from the N-terminus, the 101-residue chain is Chaperone modulatory protein CbpM (101 aa).

The protein belongs to the CbpM family.

Its function is as follows. Interacts with CbpA and inhibits both the DnaJ-like co-chaperone activity and the DNA binding activity of CbpA. Together with CbpA, modulates the activity of the DnaK chaperone system. Does not inhibit the co-chaperone activity of DnaJ. This chain is Chaperone modulatory protein CbpM, found in Pseudomonas putida (strain ATCC 47054 / DSM 6125 / CFBP 8728 / NCIMB 11950 / KT2440).